A 207-amino-acid polypeptide reads, in one-letter code: Peptidyl-tRNA hydrolase (207 aa).

Tyrosine 17 is a binding site for tRNA. Catalysis depends on histidine 22, which acts as the Proton acceptor. TRNA-binding residues include phenylalanine 68, asparagine 70, and asparagine 116.

It belongs to the PTH family. Monomer.

The protein localises to the cytoplasm. It catalyses the reaction an N-acyl-L-alpha-aminoacyl-tRNA + H2O = an N-acyl-L-amino acid + a tRNA + H(+). Functionally, hydrolyzes ribosome-free peptidyl-tRNAs (with 1 or more amino acids incorporated), which drop off the ribosome during protein synthesis, or as a result of ribosome stalling. In terms of biological role, catalyzes the release of premature peptidyl moieties from peptidyl-tRNA molecules trapped in stalled 50S ribosomal subunits, and thus maintains levels of free tRNAs and 50S ribosomes. This chain is Peptidyl-tRNA hydrolase, found in Buchnera aphidicola subsp. Baizongia pistaciae (strain Bp).